A 351-amino-acid polypeptide reads, in one-letter code: Ferredoxin--NADP reductase (351 aa).

8 residues coordinate FAD: Thr14, Asp33, Gln41, Tyr46, Ala86, Phe121, Asp287, and Thr328.

It belongs to the ferredoxin--NADP reductase type 2 family. In terms of assembly, homodimer. It depends on FAD as a cofactor.

The enzyme catalyses 2 reduced [2Fe-2S]-[ferredoxin] + NADP(+) + H(+) = 2 oxidized [2Fe-2S]-[ferredoxin] + NADPH. The sequence is that of Ferredoxin--NADP reductase from Flavobacterium psychrophilum (strain ATCC 49511 / DSM 21280 / CIP 103535 / JIP02/86).